A 168-amino-acid chain; its full sequence is Transcription antitermination protein NusB (168 aa).

Belongs to the NusB family.

Involved in transcription antitermination. Required for transcription of ribosomal RNA (rRNA) genes. Binds specifically to the boxA antiterminator sequence of the ribosomal RNA (rrn) operons. The protein is Transcription antitermination protein NusB of Chlamydia trachomatis serovar A (strain ATCC VR-571B / DSM 19440 / HAR-13).